Here is a 193-residue protein sequence, read N- to C-terminus: Putative 3-methyladenine DNA glycosylase (193 aa).

This sequence belongs to the DNA glycosylase MPG family.

The chain is Putative 3-methyladenine DNA glycosylase from Agrobacterium fabrum (strain C58 / ATCC 33970) (Agrobacterium tumefaciens (strain C58)).